A 218-amino-acid chain; its full sequence is tRNA (guanine-N(7)-)-methyltransferase (218 aa).

Residues Glu43, Asp68, Glu101, and Asn124 each contribute to the S-adenosyl-L-methionine site. Substrate is bound by residues Lys128 and Asp160.

It belongs to the class I-like SAM-binding methyltransferase superfamily. TrmB family.

The enzyme catalyses guanosine(46) in tRNA + S-adenosyl-L-methionine = N(7)-methylguanosine(46) in tRNA + S-adenosyl-L-homocysteine. Its pathway is tRNA modification; N(7)-methylguanine-tRNA biosynthesis. Functionally, catalyzes the formation of N(7)-methylguanine at position 46 (m7G46) in tRNA. The protein is tRNA (guanine-N(7)-)-methyltransferase of Acetivibrio thermocellus (strain ATCC 27405 / DSM 1237 / JCM 9322 / NBRC 103400 / NCIMB 10682 / NRRL B-4536 / VPI 7372) (Clostridium thermocellum).